A 177-amino-acid polypeptide reads, in one-letter code: Small ribosomal subunit protein uS5 (177 aa).

The region spanning Leu-21–Ile-84 is the S5 DRBM domain.

It belongs to the universal ribosomal protein uS5 family. Part of the 30S ribosomal subunit. Contacts proteins S4 and S8.

In terms of biological role, with S4 and S12 plays an important role in translational accuracy. Functionally, located at the back of the 30S subunit body where it stabilizes the conformation of the head with respect to the body. This chain is Small ribosomal subunit protein uS5, found in Nitrosomonas eutropha (strain DSM 101675 / C91 / Nm57).